Consider the following 481-residue polypeptide: Xylulose kinase (481 aa).

A substrate-binding site is contributed by 81–82 (QH). Asp-239 (proton acceptor) is an active-site residue.

Belongs to the FGGY kinase family.

The enzyme catalyses D-xylulose + ATP = D-xylulose 5-phosphate + ADP + H(+). Catalyzes the phosphorylation of D-xylulose to D-xylulose 5-phosphate. This chain is Xylulose kinase, found in Streptomyces rubiginosus.